Reading from the N-terminus, the 206-residue chain is Ras-related protein Ral-A (206 aa).

Residue 21-28 participates in GTP binding; it reads GSGGVGKS. The Effector region motif lies at 43–51; the sequence is YEPTKADSY. GTP is bound by residues 68–72 and 127–130; these read DTAGQ and NKSD. Phosphoserine is present on Ser-194. Cys-203 is subject to Cysteine methyl ester. Residue Cys-203 is the site of S-geranylgeranyl cysteine attachment. Positions 204–206 are cleaved as a propeptide — removed in mature form; it reads CIL.

This sequence belongs to the small GTPase superfamily. Ras family. Interacts (via effector domain) with RALBP1; during mitosis, recruits RALBP1 to the mitochondrion where it promotes DNM1L phosphorylation and mitochondrial fission. Interacts with EXOC2/Sec5 and EXOC8/Exo84; binding to EXOC2 and EXOC8 is mutually exclusive. Interacts with Clostridium exoenzyme C3. Interacts with RALGPS1. Interacts with LPAR1 and LPAR2. Interacts with GRK2 in response to LPAR1 activation. RALA and GRK2 binding to LPAR1 is mutually exclusive. Interacts with CDC42. In terms of processing, prenylation is essential for membrane localization. Phosphorylated. Phosphorylation at Ser-194 by AURKA/Aurora kinase A, during mitosis, induces RALA localization to the mitochondrion where it regulates mitochondrial fission.

It is found in the cell membrane. It localises to the cleavage furrow. Its subcellular location is the midbody. The protein localises to the midbody ring. The protein resides in the mitochondrion. The catalysed reaction is GTP + H2O = GDP + phosphate + H(+). With respect to regulation, alternates between an inactive form bound to GDP and an active form bound to GTP. Activated by a guanine nucleotide-exchange factor (GEF) and inactivated by a GTPase-activating protein (GAP). In terms of biological role, multifunctional GTPase involved in a variety of cellular processes including gene expression, cell migration, cell proliferation, oncogenic transformation and membrane trafficking. Accomplishes its multiple functions by interacting with distinct downstream effectors. Acts as a GTP sensor for GTP-dependent exocytosis of dense core vesicles. Key regulator of LPAR1 signaling and competes with GRK2 for binding to LPAR1 thus affecting the signaling properties of the receptor. Required for anchorage-independent proliferation of transformed cells. The RALA-exocyst complex regulates integrin-dependent membrane raft exocytosis and growth signaling. During mitosis, supports the stabilization and elongation of the intracellular bridge between dividing cells. Cooperates with EXOC2 to recruit other components of the exocyst to the early midbody. During mitosis, also controls mitochondrial fission by recruiting to the mitochondrion RALBP1, which mediates the phosphorylation and activation of DNM1L by the mitotic kinase cyclin B-CDK1. In Mus musculus (Mouse), this protein is Ras-related protein Ral-A (Rala).